Consider the following 253-residue polypeptide: 2-dehydro-3-deoxy-D-gluconate 5-dehydrogenase (253 aa).

14 to 38 (VVTGCDTGLGQGMALGLAQAGCDIV) contributes to the NAD(+) binding site. Position 145 (Ser145) interacts with substrate. The active-site Proton acceptor is Tyr158.

This sequence belongs to the short-chain dehydrogenases/reductases (SDR) family. Homotetramer.

It carries out the reaction 2-dehydro-3-deoxy-D-gluconate + NAD(+) = 3-deoxy-D-glycero-2,5-hexodiulosonate + NADH + H(+). It catalyses the reaction 4-pregnen-20,21-diol-3-one + NAD(+) = 21-hydroxyprogesterone + NADH + H(+). Catalyzes the reversible reduction of 2,5-diketo-3-deoxygluconate (DKII or 4,6-dihydroxy-2,5-dioxohexanoate) into 2-keto-3-deoxygluconate (KDG or 2-dehydro-3-deoxygluconate) with a concomitant oxidation of NADH. To a lesser extent, can also reduce 5-keto-D-gluconate and oxidize D-gluconate and 1,2-propanediol. Together with KduI, seems to play a role in the catabolism of hexuronates under osmotic stress conditions, substituting for the regular hexuronate degrading enzymes UxaABC and UxuAB whose expression is repressed in these conditions. In vitro, also exhibits NADH-dependent 20-ketosteroid reductase activity against eukaryotic steroid hormone 11-deoxycorticosterone (11-DOC), which is converted into the product 4-pregnen-20,21-diol-3-one. In addition to 11-DOC, five other C21 steroid compounds (11-deoxycortisol, cortisol, corticosterone, cortisone, and 21-hydroxypregnenolone) are reduced by KduD, but steroids lacking the hydroxyl group at C21 position, such as pregnenolone, testosterone propionate, cortisone acetate, or progesterone, cannot be used as substrate. This is 2-dehydro-3-deoxy-D-gluconate 5-dehydrogenase from Escherichia coli (strain K12).